The chain runs to 336 residues: Neuropeptides B/W receptor type 2 (336 aa).

The tract at residues 1-25 (MMEATGLEGLESTSSPCPGSTGTGL) is disordered. The Extracellular portion of the chain corresponds to 1–45 (MMEATGLEGLESTSSPCPGSTGTGLSWDNGTRHNATFPEPLPALY). Residues 12–25 (STSSPCPGSTGTGL) are compositionally biased toward low complexity. N-linked (GlcNAc...) asparagine glycans are attached at residues N29 and N34. A helical membrane pass occupies residues 46–68 (VLLPVVYSVICAVGLVGNAAVIC). Residues 69 to 80 (VILRAPKMKTVT) are Cytoplasmic-facing. Residues 81 to 103 (HVFILNLAIADGLFTLVLPTNIA) form a helical membrane-spanning segment. Residues 104-127 (EHLLQRWPFGEVLCKLVLAIDHCN) lie on the Extracellular side of the membrane. The cysteines at positions 117 and 197 are disulfide-linked. Residues 128–146 (IFSSVYFLAAMSIDRYLVV) traverse the membrane as a helical segment. Over 147-165 (LATARSRRMPRRTVHRAKV) the chain is Cytoplasmic. A helical transmembrane segment spans residues 166–188 (ASLCVWLGVTVAVLPFLTFAGVY). Over 189–213 (NNELQVTSCGLSFPRPERAWFQASR) the chain is Extracellular. A helical membrane pass occupies residues 214-236 (IYTLVLGFVVPMCTLCVLYADLL). Residues 237 to 256 (RRLRALRLHSGAKALGKAKR) are Cytoplasmic-facing. The chain crosses the membrane as a helical span at residues 257 to 279 (KVSLLVLAVLAVGLLCWTPFHLA). Residues 280–293 (SIVALTTDLPQTPL) are Extracellular-facing. Residues 294-316 (VIIVSYVVTSLSYTSSCLNPFLY) traverse the membrane as a helical segment. Topologically, residues 317–336 (AFLDHSFRKSLRTACRCQGA) are cytoplasmic.

The protein belongs to the G-protein coupled receptor 1 family.

It is found in the cell membrane. Functionally, interacts specifically with a number of opioid ligands. Receptor for neuropeptides B and W, which may be involved in neuroendocrine system regulation, food intake and the organization of other signals. This is Neuropeptides B/W receptor type 2 (NPBWR2) from Bos taurus (Bovine).